The sequence spans 418 residues: CCA-adding enzyme (418 aa).

ATP contacts are provided by S54 and R57. 2 residues coordinate CTP: S54 and R57. 3 residues coordinate Mg(2+): D66, D68, and D118. ATP-binding residues include H141, K161, and Y170. Positions 141, 161, and 170 each coordinate CTP.

It belongs to the tRNA nucleotidyltransferase/poly(A) polymerase family. Archaeal CCA-adding enzyme subfamily. Homodimer. It depends on Mg(2+) as a cofactor.

It catalyses the reaction a tRNA precursor + 2 CTP + ATP = a tRNA with a 3' CCA end + 3 diphosphate. The enzyme catalyses a tRNA with a 3' CCA end + 2 CTP + ATP = a tRNA with a 3' CCACCA end + 3 diphosphate. Functionally, catalyzes the addition and repair of the essential 3'-terminal CCA sequence in tRNAs without using a nucleic acid template. Adds these three nucleotides in the order of C, C, and A to the tRNA nucleotide-73, using CTP and ATP as substrates and producing inorganic pyrophosphate. tRNA 3'-terminal CCA addition is required both for tRNA processing and repair. Also involved in tRNA surveillance by mediating tandem CCA addition to generate a CCACCA at the 3' terminus of unstable tRNAs. While stable tRNAs receive only 3'-terminal CCA, unstable tRNAs are marked with CCACCA and rapidly degraded. This Pyrobaculum islandicum (strain DSM 4184 / JCM 9189 / GEO3) protein is CCA-adding enzyme.